A 156-amino-acid chain; its full sequence is Ribonuclease pancreatic (156 aa).

The N-terminal stretch at 1-28 (MALEKSLALLPLLVLVLLVLGWVQPSLG) is a signal peptide. Residues 33–43 (AKKFQRQHMDS) are compositionally biased toward basic and acidic residues. Residues 33 to 52 (AKKFQRQHMDSDGSPSSNPT) are disordered. Positions 35 and 38 each coordinate substrate. Residue histidine 40 is the Proton acceptor of the active site. Disulfide bonds link cysteine 54–cysteine 112, cysteine 68–cysteine 123, cysteine 86–cysteine 138, and cysteine 93–cysteine 100. A glycan (N-linked (GlcNAc...) asparagine) is linked at asparagine 62. 69-73 (KPVNT) provides a ligand contact to substrate. An N-linked (GlcNAc...) asparagine glycan is attached at asparagine 90. The substrate site is built by lysine 94 and arginine 113. N-linked (GlcNAc...) asparagine glycosylation is present at asparagine 116. Catalysis depends on histidine 147, which acts as the Proton donor.

This sequence belongs to the pancreatic ribonuclease family. Monomer. Interacts with and forms tight 1:1 complexes with RNH1. Dimerization of two such complexes may occur. Interaction with RNH1 inhibits this protein.

The protein localises to the secreted. It catalyses the reaction an [RNA] containing cytidine + H2O = an [RNA]-3'-cytidine-3'-phosphate + a 5'-hydroxy-ribonucleotide-3'-[RNA].. The catalysed reaction is an [RNA] containing uridine + H2O = an [RNA]-3'-uridine-3'-phosphate + a 5'-hydroxy-ribonucleotide-3'-[RNA].. Endonuclease that catalyzes the cleavage of RNA on the 3' side of pyrimidine nucleotides. Acts on single-stranded and double-stranded RNA. This is Ribonuclease pancreatic (RNASE1) from Ateles geoffroyi (Black-handed spider monkey).